A 156-amino-acid polypeptide reads, in one-letter code: SsrA-binding protein (156 aa).

It belongs to the SmpB family.

It is found in the cytoplasm. Functionally, required for rescue of stalled ribosomes mediated by trans-translation. Binds to transfer-messenger RNA (tmRNA), required for stable association of tmRNA with ribosomes. tmRNA and SmpB together mimic tRNA shape, replacing the anticodon stem-loop with SmpB. tmRNA is encoded by the ssrA gene; the 2 termini fold to resemble tRNA(Ala) and it encodes a 'tag peptide', a short internal open reading frame. During trans-translation Ala-aminoacylated tmRNA acts like a tRNA, entering the A-site of stalled ribosomes, displacing the stalled mRNA. The ribosome then switches to translate the ORF on the tmRNA; the nascent peptide is terminated with the 'tag peptide' encoded by the tmRNA and targeted for degradation. The ribosome is freed to recommence translation, which seems to be the essential function of trans-translation. In Clostridium tetani (strain Massachusetts / E88), this protein is SsrA-binding protein.